The chain runs to 210 residues: Holliday junction branch migration complex subunit RuvA (210 aa).

A domain I region spans residues 1-64 (MIGLIEGRVC…EDAQLLYGFL (64 aa)). Positions 65-143 (HPTERDVFRQ…HIQSDMSLLT (79 aa)) are domain II. The tract at residues 144 to 154 (EVEQQIGIAAN) is flexible linker. Positions 155 to 210 (SEGVILAEVESALISLGYRDKEAQQAIKAARETDAGQQLVDTQSLLKLTLKQLSNF) are domain III.

Belongs to the RuvA family. Homotetramer. Forms an RuvA(8)-RuvB(12)-Holliday junction (HJ) complex. HJ DNA is sandwiched between 2 RuvA tetramers; dsDNA enters through RuvA and exits via RuvB. An RuvB hexamer assembles on each DNA strand where it exits the tetramer. Each RuvB hexamer is contacted by two RuvA subunits (via domain III) on 2 adjacent RuvB subunits; this complex drives branch migration. In the full resolvosome a probable DNA-RuvA(4)-RuvB(12)-RuvC(2) complex forms which resolves the HJ.

The protein localises to the cytoplasm. Functionally, the RuvA-RuvB-RuvC complex processes Holliday junction (HJ) DNA during genetic recombination and DNA repair, while the RuvA-RuvB complex plays an important role in the rescue of blocked DNA replication forks via replication fork reversal (RFR). RuvA specifically binds to HJ cruciform DNA, conferring on it an open structure. The RuvB hexamer acts as an ATP-dependent pump, pulling dsDNA into and through the RuvAB complex. HJ branch migration allows RuvC to scan DNA until it finds its consensus sequence, where it cleaves and resolves the cruciform DNA. This is Holliday junction branch migration complex subunit RuvA from Psychrobacter sp. (strain PRwf-1).